A 403-amino-acid chain; its full sequence is Aminomethyltransferase, mitochondrial (403 aa).

A mitochondrion-targeting transit peptide spans 1 to 28 (MQRAMTVVPHLGLRLQALPLALGRPLSR). Glu232, Arg261, and Tyr399 together coordinate substrate.

This sequence belongs to the GcvT family. The glycine cleavage system is composed of four proteins: P, T, L and H.

The protein localises to the mitochondrion. The enzyme catalyses N(6)-[(R)-S(8)-aminomethyldihydrolipoyl]-L-lysyl-[protein] + (6S)-5,6,7,8-tetrahydrofolate = N(6)-[(R)-dihydrolipoyl]-L-lysyl-[protein] + (6R)-5,10-methylene-5,6,7,8-tetrahydrofolate + NH4(+). Functionally, the glycine cleavage system catalyzes the degradation of glycine. This is Aminomethyltransferase, mitochondrial from Canis lupus familiaris (Dog).